The chain runs to 322 residues: Cytochrome f (322 aa).

Positions 1–37 are cleaved as a signal peptide; sequence MQNRKTYAYDWIKKWMIKSISTLIIINTMVWSSVSEA. Heme is bound by residues Y38, C58, C61, and H62. Residues 285–307 traverse the membrane as a helical segment; the sequence is VLRVQGLLLFFASVILAQIFLVL.

It belongs to the cytochrome f family. As to quaternary structure, the 4 large subunits of the cytochrome b6-f complex are cytochrome b6, subunit IV (17 kDa polypeptide, petD), cytochrome f and the Rieske protein, while the 4 small subunits are PetG, PetL, PetM and PetN. The complex functions as a dimer. Heme serves as cofactor.

Its subcellular location is the plastid. The protein localises to the chloroplast thylakoid membrane. Functionally, component of the cytochrome b6-f complex, which mediates electron transfer between photosystem II (PSII) and photosystem I (PSI), cyclic electron flow around PSI, and state transitions. This chain is Cytochrome f (petA), found in Anthoceros angustus (Hornwort).